A 391-amino-acid chain; its full sequence is S-adenosylmethionine synthase (391 aa).

H14 lines the ATP pocket. A Mg(2+)-binding site is contributed by D16. K(+) is bound at residue E42. The L-methionine site is built by E55 and Q98. The tract at residues 98 to 108 (QSADIAMGVDE) is flexible loop. Residues 172 to 174 (DGK), 238 to 239 (RF), D247, 253 to 254 (RK), A270, and K274 contribute to the ATP site. D247 is a binding site for L-methionine. Position 278 (K278) interacts with L-methionine.

The protein belongs to the AdoMet synthase family. Homotetramer; dimer of dimers. The cofactor is Mg(2+). Requires K(+) as cofactor.

The protein localises to the cytoplasm. It catalyses the reaction L-methionine + ATP + H2O = S-adenosyl-L-methionine + phosphate + diphosphate. The protein operates within amino-acid biosynthesis; S-adenosyl-L-methionine biosynthesis; S-adenosyl-L-methionine from L-methionine: step 1/1. Its function is as follows. Catalyzes the formation of S-adenosylmethionine (AdoMet) from methionine and ATP. The overall synthetic reaction is composed of two sequential steps, AdoMet formation and the subsequent tripolyphosphate hydrolysis which occurs prior to release of AdoMet from the enzyme. This is S-adenosylmethionine synthase from Clostridium acetobutylicum (strain ATCC 824 / DSM 792 / JCM 1419 / IAM 19013 / LMG 5710 / NBRC 13948 / NRRL B-527 / VKM B-1787 / 2291 / W).